Reading from the N-terminus, the 519-residue chain is Flavin-dependent halogenase rdc2 (519 aa).

Residues 1 to 21 form the signal peptide; that stretch reads MSVPKSCTILVAGGGPAGSYA. FAD-binding residues include G14, A17, and E47. The chloride site is built by S324 and G325.

It belongs to the flavin-dependent halogenase family.

It functions in the pathway secondary metabolite biosynthesis. Flavin-dependent halogenase; part of the gene cluster that mediates the biosynthesis of radicicol, a resorcylic acid lactone (RAL) that irreversibly inhibits the HSP90 molecular chaperone, an important target for cancer chemotherapy. Within the cluster, rdc2 is involved in the chlorination of the resorcylic acid lactone (RAL) structure to convert monocillin I into radicicol. Also chlorinates monocillin II to produce 6-cholomonocillin II and monocilllin IV to produce 13-chloromonocillin IV. In contrast to most fungal halogenases, rdc2 has a broad substrate specificity and can accept a variety of macrolactones as the substrates to generate chlorinated derivatives, including dihydroresorcylide, zearalenone, curvularin, or even curcumin. Rdc2 is able to dichlorinate dihydroresorcylide and monocillin IV. Dihydroresorcylide is first chlorinated at position 11 to produce 11-chlorodihydroresorcylide which can be further chlorinated by rdc2 at possition 13. Mororeover, rdc2 can incorporate bromine into dihydroresorcylide to yield the corresponding mono- and di-brominated derivatives. Finally, rdc2 is also able to halogenate the isoquinolines 4-hydroxyisoquinoline and 6-hydroxyisoquinoline into 3-chloro-4-hydroxyisoquinoline and 5-chloro-6-hydroxyisoquinoline, respectively. The radicicol cluster encodes only two apparent post-PKS enzymes, a cytochrome P450 monooxygenase (rdc4) and a non-heme halogenase (rdc2) that could introduce the epoxide and the chlorine, respectively. If this cluster includes all the genes required for radicicol biosynthesis, the remaining structural features of radicicol are presumably generated by the PKSs rdc1 and rdc5. The C-2' ketone could arise if the R-PKS rdc5 and NR-PKS rdc1 each carry out four iterations, in contrast to the five iteration-three iteration split for the hypothemycin PKSs. The origin of the cis 5',6' double bond is not known. The radicicol R-PKS rdc5 ER domain may catalyze either double bond isomerization or reduction in the third iteration. The polypeptide is Flavin-dependent halogenase rdc2 (Metacordyceps chlamydosporia (Nematophagous fungus)).